The primary structure comprises 449 residues: NADH-quinone oxidoreductase subunit F (449 aa).

67 to 76 (GRGGAGFPTG) contacts NAD(+). Residue 179 to 226 (GAGAYICGEETALLDSLEGRRGQPRLRPPFPAVAGLYACPTVVNNVES) participates in FMN binding. [4Fe-4S] cluster contacts are provided by Cys355, Cys358, Cys361, and Cys401.

This sequence belongs to the complex I 51 kDa subunit family. The cofactor is FMN. It depends on [4Fe-4S] cluster as a cofactor.

The enzyme catalyses a quinone + NADH + 5 H(+)(in) = a quinol + NAD(+) + 4 H(+)(out). Functionally, NDH-1 shuttles electrons from NADH, via FMN and iron-sulfur (Fe-S) centers, to quinones in the respiratory chain. Couples the redox reaction to proton translocation (for every two electrons transferred, four hydrogen ions are translocated across the cytoplasmic membrane), and thus conserves the redox energy in a proton gradient. The sequence is that of NADH-quinone oxidoreductase subunit F (nuoF) from Streptomyces coelicolor (strain ATCC BAA-471 / A3(2) / M145).